The chain runs to 242 residues: uncharacterized protein (242 aa).

Belongs to the MtxX family.

This is an uncharacterized protein from Methanothermobacter thermautotrophicus (strain ATCC 29096 / DSM 1053 / JCM 10044 / NBRC 100330 / Delta H) (Methanobacterium thermoautotrophicum).